The chain runs to 338 residues: Ketol-acid reductoisomerase (NADP(+)) (338 aa).

The KARI N-terminal Rossmann domain maps to 1-181; sequence MKVFYDKDCD…GGGRAGIIET (181 aa). NADP(+)-binding positions include 24 to 27, Arg47, and Ser52; that span reads YGSQ. The active site involves His107. Gly133 contributes to the NADP(+) binding site. The region spanning 182–327 is the KARI C-terminal knotted domain; sequence NFREETETDL…AKLRAMMPWI (146 aa). Residues Asp190, Glu194, Glu226, and Glu230 each coordinate Mg(2+). Ser251 contributes to the substrate binding site.

This sequence belongs to the ketol-acid reductoisomerase family. Mg(2+) is required as a cofactor.

The catalysed reaction is (2R)-2,3-dihydroxy-3-methylbutanoate + NADP(+) = (2S)-2-acetolactate + NADPH + H(+). It catalyses the reaction (2R,3R)-2,3-dihydroxy-3-methylpentanoate + NADP(+) = (S)-2-ethyl-2-hydroxy-3-oxobutanoate + NADPH + H(+). It functions in the pathway amino-acid biosynthesis; L-isoleucine biosynthesis; L-isoleucine from 2-oxobutanoate: step 2/4. It participates in amino-acid biosynthesis; L-valine biosynthesis; L-valine from pyruvate: step 2/4. Involved in the biosynthesis of branched-chain amino acids (BCAA). Catalyzes an alkyl-migration followed by a ketol-acid reduction of (S)-2-acetolactate (S2AL) to yield (R)-2,3-dihydroxy-isovalerate. In the isomerase reaction, S2AL is rearranged via a Mg-dependent methyl migration to produce 3-hydroxy-3-methyl-2-ketobutyrate (HMKB). In the reductase reaction, this 2-ketoacid undergoes a metal-dependent reduction by NADPH to yield (R)-2,3-dihydroxy-isovalerate. This chain is Ketol-acid reductoisomerase (NADP(+)), found in Janthinobacterium sp. (strain Marseille) (Minibacterium massiliensis).